The following is a 1208-amino-acid chain: MERLRDVRERLQAWERAFRRQRGRRPSQDDVEAAPEETRALYREYRTLKRTTGQAGGGLRSSESLPAAAEEAPEPRCWGPHLNRAATKSPQSTPGRSRQGSVPDYGQRLKANLKGTLQAGPALGRRPWPLGRASSKASTPKPPGTGPVPSFAEKVSDEPPQLPEPQPRPGRLQHLQASLSQRLGSLDPGWLQRCHSEVPDFLGAPKACRPDLGSEESQLLIPGESAVLGPGAGSQGPEASAFQEVSIRVGSPQPSSSGGEKRRWNEEPWESPAQVQQESSQAGPPSEGAGAVAVEEDPPGEPVQAQPPQPCSSPSNPRYHGLSPSSQARAGKAEGTAPLHIFPRLARHDRGNYVRLNMKQKHYVRGRALRSRLLRKQAWKQKWRKKGECFGGGGATVTTKESCFLNEQFDHWAAQCPRPASEEDTDAVGPEPLVPSPQPVPEVPSLDPTVLPLYSLGPSGQLAETPAEVFQALEQLGHQAFRPGQERAVMRILSGISTLLVLPTGAGKSLCYQLPALLYSRRSPCLTLVVSPLLSLMDDQVSGLPPCLKAACIHSGMTRKQRESVLQKIRAAQVHVLMLTPEALVGAGGLPPAAQLPPVAFACIDEAHCLSQWSHNFRPCYLRVCKVLRERMGVHCFLGLTATATRRTASDVAQHLAVAEEPDLHGPAPVPTNLHLSVSMDRDTDQALLTLLQGKRFQNLDSIIIYCNRREDTERIAALLRTCLHAAWVPGSGGRAPKTTAEAYHAGMCSRERRRVQRAFMQGQLRVVVATVAFGMGLDRPDVRAVLHLGLPPSFESYVQAVGRAGRDGQPAHCHLFLQPQGEDLRELRRHVHADSTDFLAVKRLVQRVFPACTCTCTRPPSEQEGAVGGERPVPKYPPQEAEQLSHQAAPGPRRVCMGHERALPIQLTVQALDMPEEAIETLLCYLELHPHHWLELLATTYTHCRLNCPGGPAQLQALAHRCPPLAVCLAQQLPEDPGQGSSSVEFDMVKLVDSMGWELASVRRALCQLQWDHEPRTGVRRGTGVLVEFSELAFHLRSPGDLTAEEKDQICDFLYGRVQARERQALARLRRTFQAFHSVAFPSCGPCLEQQDEERSTRLKDLLGRYFEEEEGQEPGGMEDAQGPEPGQARLQDWEDQVRCDIRQFLSLRPEEKFSSRAVARIFHGIGSPCYPAQVYGQDRRFWRKYLHLSFHALVGLATEELLQVAR.

Disordered regions lie at residues 17 to 180 (AFRR…ASLS) and 201 to 333 (FLGA…AGKA). Ser27 carries the phosphoserine modification. Residues 36 to 47 (EETRALYREYRT) show a composition bias toward basic and acidic residues. The span at 61–70 (SSESLPAAAE) shows a compositional bias: low complexity. The segment covering 86–100 (ATKSPQSTPGRSRQG) has biased composition (polar residues). 2 positions are modified to phosphoserine: Ser178 and Ser180. Over residues 273 to 283 (AQVQQESSQAG) the composition is skewed to polar residues. Positions 489-662 (VMRILSGIST…AQHLAVAEEP (174 aa)) constitute a Helicase ATP-binding domain. 502–509 (LPTGAGKS) is an ATP binding site. Positions 605–608 (DEAH) match the DEAH box motif. The Helicase C-terminal domain occupies 683-850 (DTDQALLTLL…AVKRLVQRVF (168 aa)). The Zn(2+) site is built by Cys853 and Cys855. A disordered region spans residues 860–888 (PPSEQEGAVGGERPVPKYPPQEAEQLSHQ). Residues Cys897 and His900 each coordinate Zn(2+). A disordered region spans residues 1111-1130 (EEGQEPGGMEDAQGPEPGQA). Residues 1117-1208 (GGMEDAQGPE…ATEELLQVAR (92 aa)) form an increases helicase activity about 5-fold (in a fragment starting at residue 427) region.

Belongs to the helicase family. RecQ subfamily. Interacts with UBR1 and UBR2. Interacts with MCM10; this interaction regulates RECQL4 unwinding activity. Interacts (via residues 1-54) with TOPBP1. Zn(2+) is required as a cofactor. In terms of tissue distribution, ubiquitously expressed, with highest levels in thymus and testis.

It localises to the cytoplasm. It is found in the nucleus. The catalysed reaction is Couples ATP hydrolysis with the unwinding of duplex DNA by translocating in the 3'-5' direction.. The enzyme catalyses ATP + H2O = ADP + phosphate + H(+). Functionally, an ATP-dependent DNA helicase which unwinds dsDNA with a 3'-overhang in a 3'-5' direction. Does not unwind more than 18 bp of dsDNA. May modulate chromosome segregation. The N-terminal domain (residues 1-54) binds DNA Y-shaped DNA better than ss- or dsDNA. The core helicase domain binds ssDNA. The chain is ATP-dependent DNA helicase Q4 (RECQL4) from Homo sapiens (Human).